Here is a 635-residue protein sequence, read N- to C-terminus: Biosynthetic arginine decarboxylase (635 aa).

Lysine 100 is subject to N6-(pyridoxal phosphate)lysine. 282-292 (LDIGGGLGVDY) serves as a coordination point for substrate.

It belongs to the Orn/Lys/Arg decarboxylase class-II family. SpeA subfamily. Mg(2+) is required as a cofactor. The cofactor is pyridoxal 5'-phosphate.

It catalyses the reaction L-arginine + H(+) = agmatine + CO2. The protein operates within amine and polyamine biosynthesis; agmatine biosynthesis; agmatine from L-arginine: step 1/1. Catalyzes the biosynthesis of agmatine from arginine. The sequence is that of Biosynthetic arginine decarboxylase from Trichlorobacter lovleyi (strain ATCC BAA-1151 / DSM 17278 / SZ) (Geobacter lovleyi).